We begin with the raw amino-acid sequence, 434 residues long: Citrate synthase (434 aa).

Catalysis depends on residues His310 and Asp368.

It belongs to the citrate synthase family.

The enzyme catalyses oxaloacetate + acetyl-CoA + H2O = citrate + CoA + H(+). Its pathway is carbohydrate metabolism; tricarboxylic acid cycle; isocitrate from oxaloacetate: step 1/2. The protein is Citrate synthase (gltA) of Bradyrhizobium diazoefficiens (strain JCM 10833 / BCRC 13528 / IAM 13628 / NBRC 14792 / USDA 110).